The following is a 408-amino-acid chain: Peptidase T (408 aa).

H78 provides a ligand contact to Zn(2+). D80 is a catalytic residue. Residue D140 participates in Zn(2+) binding. Catalysis depends on E173, which acts as the Proton acceptor. Residues E174, D196, and H379 each coordinate Zn(2+).

It belongs to the peptidase M20B family. Requires Zn(2+) as cofactor.

It is found in the cytoplasm. It carries out the reaction Release of the N-terminal residue from a tripeptide.. Functionally, cleaves the N-terminal amino acid of tripeptides. The protein is Peptidase T of Salmonella arizonae (strain ATCC BAA-731 / CDC346-86 / RSK2980).